The chain runs to 518 residues: Trigger factor (518 aa).

The 86-residue stretch at 170–255 (GDVVVIDFVG…VKGLESPQEA (86 aa)) folds into the PPIase FKBP-type domain. Positions 447 to 518 (EAPAKPAKKA…AKKAAAKKDA (72 aa)) are disordered. 2 stretches are compositionally biased toward basic residues: residues 452 to 468 (PAKKAVAKKKAPAKKAA) and 501 to 518 (PAAKKKAPAKKAAAKKDA).

Belongs to the FKBP-type PPIase family. Tig subfamily.

It is found in the cytoplasm. The enzyme catalyses [protein]-peptidylproline (omega=180) = [protein]-peptidylproline (omega=0). Functionally, involved in protein export. Acts as a chaperone by maintaining the newly synthesized protein in an open conformation. Functions as a peptidyl-prolyl cis-trans isomerase. This chain is Trigger factor, found in Maricaulis maris (strain MCS10) (Caulobacter maris).